We begin with the raw amino-acid sequence, 113 residues long: Nucleoid-associated protein THA_1374 (113 aa).

The protein belongs to the YbaB/EbfC family. As to quaternary structure, homodimer.

The protein localises to the cytoplasm. It is found in the nucleoid. In terms of biological role, binds to DNA and alters its conformation. May be involved in regulation of gene expression, nucleoid organization and DNA protection. The protein is Nucleoid-associated protein THA_1374 of Thermosipho africanus (strain TCF52B).